The chain runs to 858 residues: Coiled-coil and C2 domain-containing protein 1B (858 aa).

Disordered stretches follow at residues 112-164 (VLGV…GASQ), 180-199 (AAAS…CERG), 204-284 (ESQL…ALLS), 329-352 (VDLS…APTA), and 470-533 (EKLA…SPSV). Positions 114–143 (GVDEETEPLDGDEVADPGGSEEENGLEDTE) are enriched in acidic residues. Low complexity predominate over residues 153–164 (ASAPAAQAGASQ). A coiled-coil region spans residues 166 to 212 (LHALLEERIHNYREAAASAKEAGEAAKARRCERGLKTLESQLASVRR). Positions 186–199 (EAGEAAKARRCERG) are enriched in basic and acidic residues. Ser-209 carries the post-translational modification Phosphoserine. The span at 520–532 (PRASSSKESPSPS) shows a compositional bias: low complexity. Phosphoserine is present on Ser-593. Position 596 is a phosphothreonine (Thr-596). The stretch at 611-635 (RLSQKAEEVYAQLQKMLLEQQEKCL) forms a coiled coil. Residues 676 to 815 (DPPTHHFELK…ENECEIREIV (140 aa)) enclose the C2 domain.

Belongs to the CC2D1 family. As to quaternary structure, interacts with CHMP4B. As to expression, widely distributed in brain and peripheral tissues.

The protein localises to the nucleus. Its function is as follows. Transcription factor that binds specifically to the DRE (dual repressor element) and represses HTR1A gene transcription in neuronal cells. The chain is Coiled-coil and C2 domain-containing protein 1B (CC2D1B) from Homo sapiens (Human).